We begin with the raw amino-acid sequence, 257 residues long: UPF0246 protein Spea_1078 (257 aa).

Belongs to the UPF0246 family.

The chain is UPF0246 protein Spea_1078 from Shewanella pealeana (strain ATCC 700345 / ANG-SQ1).